The sequence spans 381 residues: Alkanesulfonate monooxygenase (381 aa).

This sequence belongs to the SsuD family. Homotetramer.

It catalyses the reaction an alkanesulfonate + FMNH2 + O2 = an aldehyde + FMN + sulfite + H2O + 2 H(+). In terms of biological role, catalyzes the desulfonation of aliphatic sulfonates. The chain is Alkanesulfonate monooxygenase from Escherichia coli O17:K52:H18 (strain UMN026 / ExPEC).